The sequence spans 203 residues: Imidazoleglycerol-phosphate dehydratase (203 aa).

It belongs to the imidazoleglycerol-phosphate dehydratase family.

Its subcellular location is the cytoplasm. It carries out the reaction D-erythro-1-(imidazol-4-yl)glycerol 3-phosphate = 3-(imidazol-4-yl)-2-oxopropyl phosphate + H2O. It participates in amino-acid biosynthesis; L-histidine biosynthesis; L-histidine from 5-phospho-alpha-D-ribose 1-diphosphate: step 6/9. The sequence is that of Imidazoleglycerol-phosphate dehydratase from Salinispora arenicola (strain CNS-205).